The primary structure comprises 374 residues: Cytochrome b (374 aa).

The next 4 helical transmembrane spans lie at 25–45 (FGSM…FLAI), 69–90 (WIIQ…YMHI), 105–125 (WLSG…GYVL), and 170–190 (FFAL…IHII). The heme b site is built by histidine 75 and histidine 89. The heme b site is built by histidine 174 and histidine 188. Histidine 193 contributes to the a ubiquinone binding site. 4 consecutive transmembrane segments (helical) span residues 218-238 (YKDM…LSFT), 280-300 (LGGA…PFTH), 312-332 (LAQI…WTAT), and 339-358 (FITI…MINP).

It belongs to the cytochrome b family. In terms of assembly, the cytochrome bc1 complex contains 3 respiratory subunits (MT-CYB, CYC1 and UQCRFS1), 2 core proteins (UQCRC1 and UQCRC2) and probably 6 low-molecular weight proteins. Requires heme b as cofactor.

Its subcellular location is the mitochondrion inner membrane. Functionally, component of the ubiquinol-cytochrome c reductase complex (complex III or cytochrome b-c1 complex) that is part of the mitochondrial respiratory chain. The b-c1 complex mediates electron transfer from ubiquinol to cytochrome c. Contributes to the generation of a proton gradient across the mitochondrial membrane that is then used for ATP synthesis. This Calliophis bivirgatus (Blue Malaysian coral snake) protein is Cytochrome b (MT-CYB).